The chain runs to 68 residues: Conotoxin Em11.5 (68 aa).

A signal peptide spans 1–26 (MMFRLTSVGCFLLVIACLNLFQVVLT). Cystine bridges form between cysteine 29–cysteine 43, cysteine 36–cysteine 48, cysteine 42–cysteine 52, and cysteine 47–cysteine 56. Residue phenylalanine 60 is modified to Phenylalanine amide. A propeptide spanning residues 64-68 (ATFQE) is cleaved from the precursor.

The protein belongs to the conotoxin I2 superfamily. Expressed by the venom duct.

It is found in the secreted. The polypeptide is Conotoxin Em11.5 (Conus emaciatus (False virgin cone)).